A 416-amino-acid polypeptide reads, in one-letter code: MLCPVSHLADLRQQVPFDLALLPPQACLVGGAVRDALLGRRREYLDWDFVVPSGAIETASAIASRYRAGFVVLDKARHIARVVFAHGTVDFAQQEGMSLEQDLARRDFTVNAIAYNFQQNKLIDPMAGVGDLQRGQLKMVAAVNLADDPLRLLRAYRQAAQLQFTLDPDTRTVLRELAPRIKTVAAERVQAEFNYLLGSPRGSQWLLAAWQDGILAHWFSHANLSSLNAIGCIDLAIAAIKNQLTLVERQQFFQALGKKGIAIAKLASLVCADVKIAEGELQRLKYSRHELRSVQAILQGYPQLSCLENSPTVRQLYFFFVELGKYLPHFVLYALAHCPHNYHSFIFELLTHYLNSGDRLAHPQPLITGKDLIDKLHIKPSPLIGQLLTEINIAHIEGKISNEQEALAYAQELGKS.

Residue 31 to 34 (GAVR) coordinates CTP. 2 residues coordinate Mg(2+): Asp46 and Asp48. CTP is bound by residues 106–107 (RD), Asn111, 148–157 (DPLRLLRAYR), and Arg188.

The protein belongs to the tRNA nucleotidyltransferase/poly(A) polymerase family. Mg(2+) is required as a cofactor.

The catalysed reaction is a tRNA precursor + 2 CTP = a tRNA with a 3' CC end + 2 diphosphate. Functionally, tRNA nucleotidyltransferase involved in the synthesis of the tRNA CCA terminus. Adds the two cytidine residues to tRNA. This Synechocystis sp. (strain ATCC 27184 / PCC 6803 / Kazusa) protein is CC-adding tRNA nucleotidyltransferase.